Consider the following 20-residue polypeptide: Putative phosphoglycerate kinase (20 aa).

It belongs to the phosphoglycerate kinase family. Monomer.

It localises to the cytoplasm. The enzyme catalyses (2R)-3-phosphoglycerate + ATP = (2R)-3-phospho-glyceroyl phosphate + ADP. Its pathway is carbohydrate degradation; glycolysis; pyruvate from D-glyceraldehyde 3-phosphate: step 2/5. This is Putative phosphoglycerate kinase (pgk) from Clostridium pasteurianum.